The primary structure comprises 421 residues: MALVVQKYGGSSLESAERIRNVAERIVATKKAGNDVVVVCSAMGDTTDELLDLAAAVNPVPPAREMDMLLTAGERISNALVAMAIESLGAEAQSFTGSQAGVLTTERHGNARIVDVTPGRVREALDEGKICIVAGFQGVNKETRDVTTLGRGGSDTTAVALAAALGADVCEIYSDVDGVYTADPRIVPNAQKLERLSFEEMLELAAVGSKILVLRSVEYARAFNVPMRVRSSYSNDPGTLIAGSMEDIPMEEAVLTGVATDKSEAKVTVLGIPDKPGEAAKVFRALADAEINIDMVLQNVSSVEDGTTDITFTCPRSDGPRAMELLKKMQQQGDWTNVLYDDQVGKVSLVGAGMKSHPGVTAEFMEALRDVNVNVELISTSEIRISVLIREDDLDKSAKALHEKFQLGGDEEATVYAGTGR.

7-10 (KYGG) provides a ligand contact to ATP. A substrate-binding site is contributed by 25-30 (RIVATK). An ATP-binding site is contributed by S41. Substrate-binding positions include 45-49 (DTTDE), E74, 125-126 (LD), 151-154 (RGGS), and S154. Residues 174–175 (SD), 180–185 (YTADPR), and K210 contribute to the ATP site. ACT domains lie at 267–343 (VTVL…YDDQ) and 349–421 (LVGA…GTGR). Substrate is bound by residues D274, 274–279 (DKPGEA), 292–294 (NID), Q298, 360–361 (VT), 374–375 (NV), and 381–382 (SE).

The protein belongs to the aspartokinase family. In terms of assembly, tetramer consisting of 2 isoforms Alpha (catalytic and regulation) and of a homodimer of 2 isoforms Beta (regulation).

It catalyses the reaction L-aspartate + ATP = 4-phospho-L-aspartate + ADP. It functions in the pathway amino-acid biosynthesis; L-lysine biosynthesis via DAP pathway; (S)-tetrahydrodipicolinate from L-aspartate: step 1/4. Its pathway is amino-acid biosynthesis; L-methionine biosynthesis via de novo pathway; L-homoserine from L-aspartate: step 1/3. The protein operates within amino-acid biosynthesis; L-threonine biosynthesis; L-threonine from L-aspartate: step 1/5. Its function is as follows. Catalyzes the phosphorylation of the beta-carboxyl group of aspartic acid with ATP to yield 4-phospho-L-aspartate, which is involved in the branched biosynthetic pathway leading to the biosynthesis of amino acids lysine, threonine, isoleucine and methionine. This chain is Aspartokinase (lysC), found in Corynebacterium efficiens (strain DSM 44549 / YS-314 / AJ 12310 / JCM 11189 / NBRC 100395).